The following is a 396-amino-acid chain: Purine ribonucleoside efflux pump NepI (396 aa).

The Cytoplasmic segment spans residues 1-21 (MSEFIAENRGADAITRPNWSA). The helical transmembrane segment at 22-42 (VFSVAFCVACLIIVEFLPVSL) threads the bilayer. Topologically, residues 43-54 (LTPMAQDLGISE) are periplasmic. The chain crosses the membrane as a helical span at residues 55–75 (GVAGQSVTVTAFVAMFASLFI). Topologically, residues 76–85 (TQTIQATDRR) are cytoplasmic. The helical transmembrane segment at 86 to 106 (YVVILFAVLLTLSCLLVSFAN) threads the bilayer. A topological domain (periplasmic) is located at residue S107. The helical transmembrane segment at 108-128 (FSLLLIGRACLGLALGGFWAM) threads the bilayer. Over 129-147 (SASLTMRLVPPRTVPKALS) the chain is Cytoplasmic. Residues 148–168 (VIFGAVSIALVIAAPLGSFLG) form a helical membrane-spanning segment. The Periplasmic portion of the chain corresponds to 169 to 175 (ELIGWRN). Residues 176 to 196 (VFNAAAVMGVLCIFWIIKSLP) form a helical membrane-spanning segment. At 197-215 (SLPGEPSHQKQNTFRLLQR) the chain is on the cytoplasmic side. Residues 216–236 (PGVMAGMIAIFMSFAGQFAFF) traverse the membrane as a helical segment. Topologically, residues 237–255 (TYIRPVYMNLAGFGVDGLT) are periplasmic. A helical membrane pass occupies residues 256-276 (LVLLSFGIASFIGTSLSSFIL). The Cytoplasmic portion of the chain corresponds to 277–281 (KRSVK). A helical transmembrane segment spans residues 282 to 302 (LALAGAPLILAVSALVLTLWG). Residues 303-305 (SDK) lie on the Periplasmic side of the membrane. Residues 306–326 (IVATGVAIIWGLTFALVPVGW) traverse the membrane as a helical segment. The Cytoplasmic segment spans residues 327 to 343 (STWITRSLADQAEKAGS). The helical transmembrane segment at 344–364 (IQVAVIQLANTCGAAIGGYAL) threads the bilayer. The Periplasmic segment spans residues 365–366 (DN). A helical membrane pass occupies residues 367–387 (IGLTSPLMLSGTLMLLTALLV). At 388 to 396 (TAKVKMKKS) the chain is on the cytoplasmic side.

Belongs to the major facilitator superfamily. DHA1 family. NepI (TC 2.A.1.2.26) subfamily.

Its subcellular location is the cell inner membrane. It carries out the reaction inosine(in) + H(+)(out) = inosine(out) + H(+)(in). The catalysed reaction is guanosine(in) + H(+)(out) = guanosine(out) + H(+)(in). In terms of biological role, involved in the efflux of purine ribonucleosides, such as inosine and guanosine. The sequence is that of Purine ribonucleoside efflux pump NepI from Shigella flexneri.